The primary structure comprises 72 residues: Translation initiation factor IF-1 (72 aa).

The S1-like domain maps to 1–72 (MAKDNVIEIE…SKGRITYRFK (72 aa)).

Belongs to the IF-1 family. In terms of assembly, component of the 30S ribosomal translation pre-initiation complex which assembles on the 30S ribosome in the order IF-2 and IF-3, IF-1 and N-formylmethionyl-tRNA(fMet); mRNA recruitment can occur at any time during PIC assembly.

The protein localises to the cytoplasm. Functionally, one of the essential components for the initiation of protein synthesis. Stabilizes the binding of IF-2 and IF-3 on the 30S subunit to which N-formylmethionyl-tRNA(fMet) subsequently binds. Helps modulate mRNA selection, yielding the 30S pre-initiation complex (PIC). Upon addition of the 50S ribosomal subunit IF-1, IF-2 and IF-3 are released leaving the mature 70S translation initiation complex. The chain is Translation initiation factor IF-1 from Pediococcus pentosaceus (strain ATCC 25745 / CCUG 21536 / LMG 10740 / 183-1w).